A 189-amino-acid chain; its full sequence is Orotate phosphoribosyltransferase (189 aa).

5-phospho-alpha-D-ribose 1-diphosphate contacts are provided by residues R99, K100, K103, H105, and 126 to 134; that span reads EDVITTGGS. Orotate is bound by residues T130 and R158.

This sequence belongs to the purine/pyrimidine phosphoribosyltransferase family. PyrE subfamily. Homodimer. Mg(2+) is required as a cofactor.

The enzyme catalyses orotidine 5'-phosphate + diphosphate = orotate + 5-phospho-alpha-D-ribose 1-diphosphate. Its pathway is pyrimidine metabolism; UMP biosynthesis via de novo pathway; UMP from orotate: step 1/2. Functionally, catalyzes the transfer of a ribosyl phosphate group from 5-phosphoribose 1-diphosphate to orotate, leading to the formation of orotidine monophosphate (OMP). In Thermosynechococcus vestitus (strain NIES-2133 / IAM M-273 / BP-1), this protein is Orotate phosphoribosyltransferase.